The following is a 392-amino-acid chain: Gastricsin (392 aa).

A signal peptide spans 1-16 (MKWMVVALLCLPLLEA). Positions 17–62 (SLLRVPLRKMKSIRETMKEQGVLKDFLKTHKYDPGQKYHFGNFGDY) are cleaved as a propeptide — activation peptide. The 314-residue stretch at 76–389 (YFGEISIGTP…DMGNNKVGLA (314 aa)) folds into the Peptidase A1 domain. Asp-94 is a catalytic residue. 2 disulfide bridges follow: Cys-107/Cys-112 and Cys-270/Cys-275. Asp-280 is an active-site residue. A disulfide bridge links Cys-314 with Cys-347.

The protein belongs to the peptidase A1 family.

The protein localises to the secreted. It carries out the reaction More restricted specificity than pepsin A, but shows preferential cleavage at Tyr-|-Xaa bonds. High activity on hemoglobin.. Its function is as follows. Hydrolyzes a variety of proteins. The sequence is that of Gastricsin (Pgc) from Rattus norvegicus (Rat).